A 96-amino-acid chain; its full sequence is Protein FPV129 (96 aa).

Helical transmembrane passes span 36–56 (IILD…FVII) and 71–91 (LFLL…LYIV).

Belongs to the chordopoxvirinae L2 family.

It localises to the virion membrane. The protein localises to the host cytoplasm. Its function is as follows. Early protein involved in early virion morphogenesis. Participates in the formation and elongation of crescent-shaped membrane precursors of immature virions in cytoplasmic factories. This is Protein FPV129 from Vertebrata (FPV).